The sequence spans 546 residues: Inosine-5'-monophosphate dehydrogenase (546 aa).

2 CBS domains span residues 135–197 (FILD…VTAI) and 198–254 (MSTD…PLAS). NAD(+) is bound by residues 292–294 (DSS) and 342–344 (GMG). Residues Gly344 and Gly346 each contribute to the K(+) site. Residue Ser347 coordinates IMP. Cys349 is a K(+) binding site. Cys349 functions as the Thioimidate intermediate in the catalytic mechanism. Residues 382-384 (DGG), 405-406 (GG), and 430-434 (YRGMG) contribute to the IMP site. Arg460 serves as the catalytic Proton acceptor. Residue Gln472 coordinates IMP. Glu531 and Gly532 together coordinate K(+).

Belongs to the IMPDH/GMPR family. As to quaternary structure, homotetramer. K(+) serves as cofactor.

Its subcellular location is the cytoplasm. It catalyses the reaction IMP + NAD(+) + H2O = XMP + NADH + H(+). The protein operates within purine metabolism; XMP biosynthesis via de novo pathway; XMP from IMP: step 1/1. With respect to regulation, mycophenolic acid (MPA) is a non-competitive inhibitor that prevents formation of the closed enzyme conformation by binding to the same site as the amobile flap. In contrast, mizoribine monophosphate (MZP) is a competitive inhibitor that induces the closed conformation. MPA is a potent inhibitor of mammalian IMPDHs but a poor inhibitor of the bacterial enzymes. MZP is a more potent inhibitor of bacterial IMPDH. In terms of biological role, catalyzes the conversion of inosine 5'-phosphate (IMP) to xanthosine 5'-phosphate (XMP), the first committed and rate-limiting step in the de novo synthesis of guanine nucleotides, and therefore plays an important role in the regulation of cell growth. This Aspergillus fumigatus (strain ATCC MYA-4609 / CBS 101355 / FGSC A1100 / Af293) (Neosartorya fumigata) protein is Inosine-5'-monophosphate dehydrogenase.